The following is a 523-amino-acid chain: Non-specific phospholipase C3 (523 aa).

Residues 44–64 (DGVSESEPRSNPLSTSDPNSA) form a disordered region. Polar residues predominate over residues 52 to 64 (RSNPLSTSDPNSA).

Belongs to the bacterial phospholipase C family. As to expression, expressed in root tips, cotyledons, on leaf margins, stems, young anthers and funiculus.

The catalysed reaction is a 1-acyl-sn-glycero-3-phosphate + H2O = a 1-acyl-sn-glycerol + phosphate. In terms of biological role, possesses specific phosphatase activity toward lysophosphatidic acid (LPA) in vitro. Does not show phospholipase C activity. May play a role in signal transduction and storage lipid synthesis. May be involved in brassinolide-mediated signaling in root development. The protein is Non-specific phospholipase C3 (NPC3) of Arabidopsis thaliana (Mouse-ear cress).